A 448-amino-acid chain; its full sequence is UDP-N-acetylmuramoylalanine--D-glutamate ligase (448 aa).

112-118 provides a ligand contact to ATP; sequence GSNAKST.

Belongs to the MurCDEF family.

Its subcellular location is the cytoplasm. It carries out the reaction UDP-N-acetyl-alpha-D-muramoyl-L-alanine + D-glutamate + ATP = UDP-N-acetyl-alpha-D-muramoyl-L-alanyl-D-glutamate + ADP + phosphate + H(+). The protein operates within cell wall biogenesis; peptidoglycan biosynthesis. Its function is as follows. Cell wall formation. Catalyzes the addition of glutamate to the nucleotide precursor UDP-N-acetylmuramoyl-L-alanine (UMA). This chain is UDP-N-acetylmuramoylalanine--D-glutamate ligase, found in Acinetobacter baumannii (strain ACICU).